Here is a 166-residue protein sequence, read N- to C-terminus: Endoribonuclease YbeY (166 aa).

3 residues coordinate Zn(2+): histidine 132, histidine 136, and histidine 142.

Belongs to the endoribonuclease YbeY family. Requires Zn(2+) as cofactor.

Its subcellular location is the cytoplasm. In terms of biological role, single strand-specific metallo-endoribonuclease involved in late-stage 70S ribosome quality control and in maturation of the 3' terminus of the 16S rRNA. The protein is Endoribonuclease YbeY of Clostridium botulinum (strain ATCC 19397 / Type A).